Here is a 296-residue protein sequence, read N- to C-terminus: Ribosomal RNA small subunit methyltransferase J (296 aa).

Asp205 contacts S-adenosyl-L-methionine.

Belongs to the methyltransferase superfamily. RsmJ family.

The protein resides in the cytoplasm. The enzyme catalyses guanosine(1516) in 16S rRNA + S-adenosyl-L-methionine = N(2)-methylguanosine(1516) in 16S rRNA + S-adenosyl-L-homocysteine + H(+). Specifically methylates the guanosine in position 1516 of 16S rRNA. This is Ribosomal RNA small subunit methyltransferase J from Psychrobacter arcticus (strain DSM 17307 / VKM B-2377 / 273-4).